A 360-amino-acid chain; its full sequence is Peptide chain release factor 1 (360 aa).

The residue at position 237 (Gln237) is an N5-methylglutamine.

This sequence belongs to the prokaryotic/mitochondrial release factor family. Methylated by PrmC. Methylation increases the termination efficiency of RF1.

It is found in the cytoplasm. Its function is as follows. Peptide chain release factor 1 directs the termination of translation in response to the peptide chain termination codons UAG and UAA. The chain is Peptide chain release factor 1 from Azotobacter vinelandii (strain DJ / ATCC BAA-1303).